The following is a 363-amino-acid chain: UDP-3-O-acylglucosamine N-acyltransferase (363 aa).

H239 functions as the Proton acceptor in the catalytic mechanism. The interval L342–K363 is disordered.

It belongs to the transferase hexapeptide repeat family. LpxD subfamily. Homotrimer.

It carries out the reaction a UDP-3-O-[(3R)-3-hydroxyacyl]-alpha-D-glucosamine + a (3R)-hydroxyacyl-[ACP] = a UDP-2-N,3-O-bis[(3R)-3-hydroxyacyl]-alpha-D-glucosamine + holo-[ACP] + H(+). Its pathway is bacterial outer membrane biogenesis; LPS lipid A biosynthesis. Its function is as follows. Catalyzes the N-acylation of UDP-3-O-acylglucosamine using 3-hydroxyacyl-ACP as the acyl donor. Is involved in the biosynthesis of lipid A, a phosphorylated glycolipid that anchors the lipopolysaccharide to the outer membrane of the cell. The chain is UDP-3-O-acylglucosamine N-acyltransferase from Syntrophus aciditrophicus (strain SB).